The primary structure comprises 840 residues: Leucine-zipper-like transcriptional regulator 1 (840 aa).

Residue alanine 2 is modified to N-acetylalanine. Kelch repeat units lie at residues 79-128, 130-185, 187-238, 239-285, 295-341, and 399-450; these read AIYV…VYGS, MFVF…VYSD, LWIF…VCRD, KMFV…QRRY, HLYV…PERA, and AMYI…FVLG. BTB domains are found at residues 443-537 and 667-736; these read CDVE…KYPR and CDIT…NMPP.

Belongs to the LZTR1 family. Homodimer. Component of the BCR(LZTR1) E3 ubiquitin ligase complex, at least composed of CUL3, LZTR1 and RBX1. Interacts with Ras (K-Ras/KRAS, N-Ras/NRAS and H-Ras/HRAS). Interacts with RAF1. Interacts with SHOC2. Interacts with PPP1CB. Post-translationally, phosphorylated on tyrosine upon induction of apoptosis, leading to its degradation by the proteasome.

It is found in the endomembrane system. The protein localises to the recycling endosome. The protein resides in the golgi apparatus. It participates in protein modification; protein ubiquitination. Substrate-specific adapter of a BCR (BTB-CUL3-RBX1) E3 ubiquitin-protein ligase complex that mediates ubiquitination of Ras (K-Ras/KRAS, N-Ras/NRAS and H-Ras/HRAS). Is a negative regulator of RAS-MAPK signaling that acts by controlling Ras levels and decreasing Ras association with membranes. This is Leucine-zipper-like transcriptional regulator 1 from Homo sapiens (Human).